The primary structure comprises 302 residues: Taste receptor type 2 member 104 (302 aa).

Topologically, residues 1-7 (MLSALES) are extracellular. A helical membrane pass occupies residues 8–28 (ILLSVATSEAMLGVLGNTFIV). Residues 29-43 (LVNYTDWVRNKKLSK) lie on the Cytoplasmic side of the membrane. Residues 44 to 64 (INFILTGLAISRIFTIWIITL) traverse the membrane as a helical segment. Topologically, residues 65-87 (DAYTKVFLLTMLMPSSLHECMSY) are extracellular. Residues 88–108 (IWVIINHLSVWFSTSLGIFYF) form a helical membrane-spanning segment. Over 109–128 (LKIANFSHYIFLWMKRRADK) the chain is Cytoplasmic. A helical transmembrane segment spans residues 129 to 149 (VFVFLIVFLIITWLASFPLAV). The Extracellular portion of the chain corresponds to 150–182 (KVIKDVKIYQSNTSWLIHLEKSELLINYVFANM). A glycan (N-linked (GlcNAc...) asparagine) is linked at asparagine 161. A helical membrane pass occupies residues 183–203 (GPISLFIVAIIACFLLTISLW). Residues 204 to 229 (RHSRQMQSIGSGFRDLNTEAHMKAMK) are Cytoplasmic-facing. Residues 230–250 (VLIAFIILFILYFLGILIETL) traverse the membrane as a helical segment. The Extracellular portion of the chain corresponds to 251 to 259 (CLFLTNNKL). The helical transmembrane segment at 260-280 (LFIFGFTLSAMYPCCHSFILI) threads the bilayer. At 281-302 (LTSRELKQATMRALQRLKCCET) the chain is on the cytoplasmic side.

This sequence belongs to the G-protein coupled receptor T2R family.

It is found in the membrane. Functionally, putative taste receptor which may play a role in the perception of bitterness. The polypeptide is Taste receptor type 2 member 104 (Mus musculus (Mouse)).